A 482-amino-acid chain; its full sequence is UDP-N-acetylmuramoyl-L-alanyl-D-glutamate--2,6-diaminopimelate ligase (482 aa).

Serine 29 contributes to the UDP-N-acetyl-alpha-D-muramoyl-L-alanyl-D-glutamate binding site. 109-115 (GTNGKTS) serves as a coordination point for ATP. Residues 151–152 (TT), serine 178, and arginine 186 each bind UDP-N-acetyl-alpha-D-muramoyl-L-alanyl-D-glutamate. Residue lysine 218 is modified to N6-carboxylysine. Meso-2,6-diaminopimelate contacts are provided by residues arginine 375, 399–402 (DNPR), glycine 451, and glutamate 455. Positions 399–402 (DNPR) match the Meso-diaminopimelate recognition motif motif.

Belongs to the MurCDEF family. MurE subfamily. Mg(2+) is required as a cofactor. Carboxylation is probably crucial for Mg(2+) binding and, consequently, for the gamma-phosphate positioning of ATP.

The protein localises to the cytoplasm. It carries out the reaction UDP-N-acetyl-alpha-D-muramoyl-L-alanyl-D-glutamate + meso-2,6-diaminopimelate + ATP = UDP-N-acetyl-alpha-D-muramoyl-L-alanyl-gamma-D-glutamyl-meso-2,6-diaminopimelate + ADP + phosphate + H(+). It functions in the pathway cell wall biogenesis; peptidoglycan biosynthesis. Catalyzes the addition of meso-diaminopimelic acid to the nucleotide precursor UDP-N-acetylmuramoyl-L-alanyl-D-glutamate (UMAG) in the biosynthesis of bacterial cell-wall peptidoglycan. The protein is UDP-N-acetylmuramoyl-L-alanyl-D-glutamate--2,6-diaminopimelate ligase of Caldanaerobacter subterraneus subsp. tengcongensis (strain DSM 15242 / JCM 11007 / NBRC 100824 / MB4) (Thermoanaerobacter tengcongensis).